We begin with the raw amino-acid sequence, 205 residues long: uncharacterized protein (205 aa).

This is an uncharacterized protein from Saccharomyces cerevisiae (strain ATCC 204508 / S288c) (Baker's yeast).